A 347-amino-acid polypeptide reads, in one-letter code: Protein RecA (347 aa).

67 to 74 (GPESSGKT) contacts ATP.

The protein belongs to the RecA family.

It is found in the cytoplasm. In terms of biological role, can catalyze the hydrolysis of ATP in the presence of single-stranded DNA, the ATP-dependent uptake of single-stranded DNA by duplex DNA, and the ATP-dependent hybridization of homologous single-stranded DNAs. It interacts with LexA causing its activation and leading to its autocatalytic cleavage. In Helicobacter acinonychis (strain Sheeba), this protein is Protein RecA.